We begin with the raw amino-acid sequence, 344 residues long: Heat-inducible transcription repressor HrcA (344 aa).

The protein belongs to the HrcA family.

Negative regulator of class I heat shock genes (grpE-dnaK-dnaJ and groELS operons). Prevents heat-shock induction of these operons. This is Heat-inducible transcription repressor HrcA from Streptococcus uberis (strain ATCC BAA-854 / 0140J).